Consider the following 297-residue polypeptide: Putative S-adenosyl-L-methionine-dependent methyltransferase MSMEG_0614/MSMEI_0598 (297 aa).

Residues Asp-125 and 154–155 (DL) each bind S-adenosyl-L-methionine.

Belongs to the UPF0677 family.

Its function is as follows. Exhibits S-adenosyl-L-methionine-dependent methyltransferase activity. The polypeptide is Putative S-adenosyl-L-methionine-dependent methyltransferase MSMEG_0614/MSMEI_0598 (Mycolicibacterium smegmatis (strain ATCC 700084 / mc(2)155) (Mycobacterium smegmatis)).